Consider the following 158-residue polypeptide: NAD(P)H-quinone oxidoreductase subunit J, chloroplastic (158 aa).

The protein belongs to the complex I 30 kDa subunit family. NDH is composed of at least 16 different subunits, 5 of which are encoded in the nucleus.

It localises to the plastid. The protein resides in the chloroplast thylakoid membrane. The enzyme catalyses a plastoquinone + NADH + (n+1) H(+)(in) = a plastoquinol + NAD(+) + n H(+)(out). It catalyses the reaction a plastoquinone + NADPH + (n+1) H(+)(in) = a plastoquinol + NADP(+) + n H(+)(out). Functionally, NDH shuttles electrons from NAD(P)H:plastoquinone, via FMN and iron-sulfur (Fe-S) centers, to quinones in the photosynthetic chain and possibly in a chloroplast respiratory chain. The immediate electron acceptor for the enzyme in this species is believed to be plastoquinone. Couples the redox reaction to proton translocation, and thus conserves the redox energy in a proton gradient. This Angiopteris evecta (Mule's foot fern) protein is NAD(P)H-quinone oxidoreductase subunit J, chloroplastic.